A 657-amino-acid chain; its full sequence is Chemoreceptor McpA (657 aa).

Topologically, residues 1-5 (MKRIR) are cytoplasmic. The chain crosses the membrane as a helical span at residues 6 to 29 (LVDLPLIIKIGFAPAFALLMLAVM). The Periplasmic segment spans residues 30–188 (AGGAILVQKS…ESESAKRQAQ (159 aa)). A helical transmembrane segment spans residues 189–212 (ATAAMSVTIIMSLLTLGAVGALAF). Over 213–657 (LTVMTTRKSI…APASDGWEEF (445 aa)) the chain is Cytoplasmic. HAMP domains are found at residues 216–269 (MTTR…HLEQ) and 297–349 (QEAS…ETMK). Residues 354–583 (STDGLSTGAD…QSTAATHSLK (230 aa)) enclose the Methyl-accepting transducer domain. Glutamine 378 carries the glutamate methyl ester (Gln) modification. Glutamate methyl ester (Glu) occurs at positions 385 and 392. Glutamine 574 is subject to Glutamate methyl ester (Gln). Residues 634-657 (ARPGRSSGSAALAQAPASDGWEEF) are disordered.

This sequence belongs to the methyl-accepting chemotaxis (MCP) protein family.

It localises to the cell membrane. In terms of biological role, chemotactic-signal transducers respond to changes in the concentration of attractants and repellents in the environment, transduce a signal from the outside to the inside of the cell, and facilitate sensory adaptation through the variation of the level of methylation. Attractants increase the level of methylation while repellents decrease the level of methylation. The chain is Chemoreceptor McpA (mcpA) from Caulobacter vibrioides (strain ATCC 19089 / CIP 103742 / CB 15) (Caulobacter crescentus).